A 403-amino-acid chain; its full sequence is MAACGKTNKSHVIFKKVSRDKSVTIYLGKRDYVDHVSQVEPVDGVVLVDPELVKGKKVYVTLTCAFRYGQEDIDVMGLTFRRDLYFSRVQVYPPVGAMSVLTQLQESLLKKLGDNTYPFLLTFPDYLPCSVMLQPAPQDVGKSCGVDFEVKAFASDITDPEEDKIPKKSSVRLLIRKVQHAPPEMGPQPSAEASWQFFMSDKPLNLSVSLSKEIYFHGEPIPVTVTVTNNTDKVVKKIKVSVEQIANVVLYSSDYYVKPVASEETQEKVQPNSTLTKTLVLVPLLANNRERRGIALDGKIKHEDTNLASSTIIKEGIDRTVMGILVSYHIKVKLTVSGFLGELTSSEVATEVPFRLMHPQPEDPAKESVQDENLVFEEFARQNLKDTGENTEGKKDEDAGQDE.

Residues 11–19 are interaction with RHO; sequence HVIFKKVSR. T231 is modified (phosphothreonine). The tract at residues 381-403 is disordered; the sequence is RQNLKDTGENTEGKKDEDAGQDE.

This sequence belongs to the arrestin family. In terms of assembly, monomer. Homodimer. Homotetramer. Interacts with RHO (via the phosphorylated C-terminus). In terms of tissue distribution, detected in retina (at protein level).

The protein localises to the cell projection. Its subcellular location is the cilium. The protein resides in the photoreceptor outer segment. It localises to the membrane. Binds to photoactivated, phosphorylated RHO and terminates RHO signaling via G-proteins by competing with G-proteins for the same binding site on RHO. May play a role in preventing light-dependent degeneration of retinal photoreceptor cells. The chain is S-arrestin (Sag) from Mus musculus (Mouse).